The chain runs to 696 residues: Macrolide export ATP-binding/permease protein MacB (696 aa).

Positions 6–244 constitute an ABC transporter domain; it reads IELKNIERYH…KPQNKRTFID (239 aa). Residue 42-49 participates in ATP binding; the sequence is GASGSGKS. The tract at residues 254–287 is disordered; the sequence is HNTEKLNRPNEKNNIDNDNKENNNGYNRNDNSFL. Residues 255-274 show a composition bias toward basic and acidic residues; that stretch reads NTEKLNRPNEKNNIDNDNKE. Low complexity predominate over residues 275 to 284; the sequence is NNNGYNRNDN. A run of 4 helical transmembrane segments spans residues 324-344, 576-596, 626-646, and 659-679; these read FLTM…IALG, IAFI…LVSV, MVSL…GGLF, and LSSF…FGYF.

This sequence belongs to the ABC transporter superfamily. Macrolide exporter (TC 3.A.1.122) family. As to quaternary structure, homodimer. Part of the tripartite efflux system MacAB-TolC, which is composed of an inner membrane transporter, MacB, a periplasmic membrane fusion protein, MacA, and an outer membrane component, TolC. The complex forms a large protein conduit and can translocate molecules across both the inner and outer membranes. Interacts with MacA.

Its subcellular location is the cell inner membrane. Functionally, part of the tripartite efflux system MacAB-TolC. MacB is a non-canonical ABC transporter that contains transmembrane domains (TMD), which form a pore in the inner membrane, and an ATP-binding domain (NBD), which is responsible for energy generation. Confers resistance against macrolides. The sequence is that of Macrolide export ATP-binding/permease protein MacB from Haemophilus ducreyi (strain 35000HP / ATCC 700724).